The sequence spans 360 residues: Peptide chain release factor 1 (360 aa).

An N5-methylglutamine modification is found at Gln-236.

Belongs to the prokaryotic/mitochondrial release factor family. Methylated by PrmC. Methylation increases the termination efficiency of RF1.

The protein localises to the cytoplasm. Its function is as follows. Peptide chain release factor 1 directs the termination of translation in response to the peptide chain termination codons UAG and UAA. This chain is Peptide chain release factor 1, found in Lactiplantibacillus plantarum (strain ATCC BAA-793 / NCIMB 8826 / WCFS1) (Lactobacillus plantarum).